The sequence spans 756 residues: Glutathione biosynthesis bifunctional protein GshAB (756 aa).

Residues 1–338 form a glutamate--cysteine ligase region; it reads MNYRELMQKK…TGDIFNEQVA (338 aa). An ATP-grasp domain is found at 493 to 751; it reads KKILSAAGFH…LTMDVLKLLY (259 aa). 520–578 is a binding site for ATP; the sequence is LRYANKAFVVKPKSTNYGLGITIFKEGASLEDFTEALRIAFKEDTAVLIEEFLPGTEYR. Mg(2+) contacts are provided by Asp-700, Glu-721, and Asn-723. Residues Asp-700, Glu-721, and Asn-723 each contribute to the Mn(2+) site.

It in the N-terminal section; belongs to the glutamate--cysteine ligase type 1 family. Type 2 subfamily. Monomer. Mg(2+) serves as cofactor. Mn(2+) is required as a cofactor.

It carries out the reaction L-cysteine + L-glutamate + ATP = gamma-L-glutamyl-L-cysteine + ADP + phosphate + H(+). It catalyses the reaction gamma-L-glutamyl-L-cysteine + glycine + ATP = glutathione + ADP + phosphate + H(+). It participates in sulfur metabolism; glutathione biosynthesis; glutathione from L-cysteine and L-glutamate: step 1/2. Its pathway is sulfur metabolism; glutathione biosynthesis; glutathione from L-cysteine and L-glutamate: step 2/2. Synthesizes glutathione from L-glutamate and L-cysteine via gamma-L-glutamyl-L-cysteine. This chain is Glutathione biosynthesis bifunctional protein GshAB, found in Enterococcus faecalis (strain ATCC 700802 / V583).